Consider the following 369-residue polypeptide: Glutamate 5-kinase (369 aa).

Lys9 is a binding site for ATP. Residues Ser49, Asp136, and Asn148 each coordinate substrate. Residues 168-169 (TD) and 210-216 (TGGMLTK) contribute to the ATP site. Positions 275-355 (QGSIWVDKGA…KGVLIYRDDW (81 aa)) constitute a PUA domain.

The protein belongs to the glutamate 5-kinase family.

It is found in the cytoplasm. The enzyme catalyses L-glutamate + ATP = L-glutamyl 5-phosphate + ADP. It functions in the pathway amino-acid biosynthesis; L-proline biosynthesis; L-glutamate 5-semialdehyde from L-glutamate: step 1/2. In terms of biological role, catalyzes the transfer of a phosphate group to glutamate to form L-glutamate 5-phosphate. The chain is Glutamate 5-kinase from Streptococcus pneumoniae (strain ATCC 700669 / Spain 23F-1).